The following is a 443-amino-acid chain: Eukaryotic translation initiation factor 3 subunit M (443 aa).

A PCI domain is found at 205-375; that stretch reads GLYQSTGNLA…SLIRIHSISS (171 aa). Residues 413–443 form a disordered region; it reads ETVAQQGLGQQRRGGKRREEKKEKEDKEEQE. Basic and acidic residues predominate over residues 429–443; it reads RREEKKEKEDKEEQE.

Belongs to the eIF-3 subunit M family. As to quaternary structure, component of the eukaryotic translation initiation factor 3 (eIF-3) complex.

The protein resides in the cytoplasm. Functionally, component of the eukaryotic translation initiation factor 3 (eIF-3) complex, which is involved in protein synthesis of a specialized repertoire of mRNAs and, together with other initiation factors, stimulates binding of mRNA and methionyl-tRNAi to the 40S ribosome. The eIF-3 complex specifically targets and initiates translation of a subset of mRNAs involved in cell proliferation. The chain is Eukaryotic translation initiation factor 3 subunit M from Cryptococcus neoformans var. neoformans serotype D (strain B-3501A) (Filobasidiella neoformans).